The following is a 344-amino-acid chain: Uroporphyrinogen decarboxylase (344 aa).

Residues Arg23–Arg27, Asp73, Tyr149, Thr204, and His321 contribute to the substrate site.

This sequence belongs to the uroporphyrinogen decarboxylase family. As to quaternary structure, homodimer.

It is found in the cytoplasm. It catalyses the reaction uroporphyrinogen III + 4 H(+) = coproporphyrinogen III + 4 CO2. It functions in the pathway porphyrin-containing compound metabolism; protoporphyrin-IX biosynthesis; coproporphyrinogen-III from 5-aminolevulinate: step 4/4. Its function is as follows. Catalyzes the decarboxylation of four acetate groups of uroporphyrinogen-III to yield coproporphyrinogen-III. The polypeptide is Uroporphyrinogen decarboxylase (Francisella tularensis subsp. holarctica (strain LVS)).